The sequence spans 166 residues: Crossover junction endodeoxyribonuclease RuvC (166 aa).

Residues aspartate 12, glutamate 71, and aspartate 143 contribute to the active site. Positions 12, 71, and 143 each coordinate Mg(2+).

This sequence belongs to the RuvC family. As to quaternary structure, homodimer which binds Holliday junction (HJ) DNA. The HJ becomes 2-fold symmetrical on binding to RuvC with unstacked arms; it has a different conformation from HJ DNA in complex with RuvA. In the full resolvosome a probable DNA-RuvA(4)-RuvB(12)-RuvC(2) complex forms which resolves the HJ. Mg(2+) is required as a cofactor.

It is found in the cytoplasm. The enzyme catalyses Endonucleolytic cleavage at a junction such as a reciprocal single-stranded crossover between two homologous DNA duplexes (Holliday junction).. In terms of biological role, the RuvA-RuvB-RuvC complex processes Holliday junction (HJ) DNA during genetic recombination and DNA repair. Endonuclease that resolves HJ intermediates. Cleaves cruciform DNA by making single-stranded nicks across the HJ at symmetrical positions within the homologous arms, yielding a 5'-phosphate and a 3'-hydroxyl group; requires a central core of homology in the junction. The consensus cleavage sequence is 5'-(A/T)TT(C/G)-3'. Cleavage occurs on the 3'-side of the TT dinucleotide at the point of strand exchange. HJ branch migration catalyzed by RuvA-RuvB allows RuvC to scan DNA until it finds its consensus sequence, where it cleaves and resolves the cruciform DNA. The sequence is that of Crossover junction endodeoxyribonuclease RuvC from Oleidesulfovibrio alaskensis (strain ATCC BAA-1058 / DSM 17464 / G20) (Desulfovibrio alaskensis).